The primary structure comprises 266 residues: Undecaprenyl-diphosphatase (266 aa).

A run of 8 helical transmembrane segments spans residues 1–21, 39–59, 83–103, 111–131, 149–169, 183–203, 218–238, and 246–266; these read MDTLQVIILALIQGLTEFLPI, QGLSFDVAVHIGSLAAVVIYF, SKLAWWIILATIPAIGVGFTA, LRGPGVIAITTVIFGLLLWFA, ALLIGVAQALALIPGTSRSGI, AAARFSFLMSIPVILGAALLM, ALALGSILSFIAAYACIYFFL, and MTPFVIYRIALGVFLCGFIYL.

This sequence belongs to the UppP family.

Its subcellular location is the cell inner membrane. The catalysed reaction is di-trans,octa-cis-undecaprenyl diphosphate + H2O = di-trans,octa-cis-undecaprenyl phosphate + phosphate + H(+). Functionally, catalyzes the dephosphorylation of undecaprenyl diphosphate (UPP). Confers resistance to bacitracin. This chain is Undecaprenyl-diphosphatase, found in Shewanella amazonensis (strain ATCC BAA-1098 / SB2B).